We begin with the raw amino-acid sequence, 419 residues long: S-adenosylmethionine synthase (419 aa).

Position 14 (H14) interacts with ATP. Mg(2+) is bound at residue D16. K(+) is bound at residue E42. L-methionine-binding residues include E55 and Q98. Residues 98–108 (QSADINQGVDR) form a flexible loop region. ATP contacts are provided by residues 164-166 (DAK), 242-243 (KF), D251, 257-258 (RK), A274, and K278. Residue D251 coordinates L-methionine. K282 provides a ligand contact to L-methionine.

It belongs to the AdoMet synthase family. In terms of assembly, homotetramer; dimer of dimers. The cofactor is Mg(2+). It depends on K(+) as a cofactor.

Its subcellular location is the cytoplasm. It carries out the reaction L-methionine + ATP + H2O = S-adenosyl-L-methionine + phosphate + diphosphate. The protein operates within amino-acid biosynthesis; S-adenosyl-L-methionine biosynthesis; S-adenosyl-L-methionine from L-methionine: step 1/1. Catalyzes the formation of S-adenosylmethionine (AdoMet) from methionine and ATP. The overall synthetic reaction is composed of two sequential steps, AdoMet formation and the subsequent tripolyphosphate hydrolysis which occurs prior to release of AdoMet from the enzyme. The chain is S-adenosylmethionine synthase from Cytophaga hutchinsonii (strain ATCC 33406 / DSM 1761 / CIP 103989 / NBRC 15051 / NCIMB 9469 / D465).